Reading from the N-terminus, the 312-residue chain is tRNA-cytidine(32) 2-sulfurtransferase (312 aa).

The short motif at 48–53 (SGGKDS) is the PP-loop motif element. Cys123, Cys126, and Cys214 together coordinate [4Fe-4S] cluster.

This sequence belongs to the TtcA family. In terms of assembly, homodimer. The cofactor is Mg(2+). It depends on [4Fe-4S] cluster as a cofactor.

It localises to the cytoplasm. The catalysed reaction is cytidine(32) in tRNA + S-sulfanyl-L-cysteinyl-[cysteine desulfurase] + AH2 + ATP = 2-thiocytidine(32) in tRNA + L-cysteinyl-[cysteine desulfurase] + A + AMP + diphosphate + H(+). Its pathway is tRNA modification. Its function is as follows. Catalyzes the ATP-dependent 2-thiolation of cytidine in position 32 of tRNA, to form 2-thiocytidine (s(2)C32). The sulfur atoms are provided by the cysteine/cysteine desulfurase (IscS) system. In Mannheimia succiniciproducens (strain KCTC 0769BP / MBEL55E), this protein is tRNA-cytidine(32) 2-sulfurtransferase.